We begin with the raw amino-acid sequence, 1323 residues long: Phosphoribosylformylglycinamidine synthase (1323 aa).

ATP contacts are provided by residues 312-323 (GAATGSGGEIRD), 391-393 (NGY), and Ala-691. Residues Asp-692, Glu-733, Asn-737, and Asp-903 each coordinate Mg(2+). Ser-905 lines the ATP pocket. Residues 1062–1306 (VAILREQGVN…YPHSKASEWG (245 aa)) enclose the Glutamine amidotransferase type-1 domain. Cys-1156 acts as the Nucleophile in catalysis. Catalysis depends on residues His-1284 and Glu-1286.

The protein in the N-terminal section; belongs to the FGAMS family.

The protein resides in the cytoplasm. It catalyses the reaction N(2)-formyl-N(1)-(5-phospho-beta-D-ribosyl)glycinamide + L-glutamine + ATP + H2O = 2-formamido-N(1)-(5-O-phospho-beta-D-ribosyl)acetamidine + L-glutamate + ADP + phosphate + H(+). It functions in the pathway purine metabolism; IMP biosynthesis via de novo pathway; 5-amino-1-(5-phospho-D-ribosyl)imidazole from N(2)-formyl-N(1)-(5-phospho-D-ribosyl)glycinamide: step 1/2. Its function is as follows. Phosphoribosylformylglycinamidine synthase involved in the purines biosynthetic pathway. Catalyzes the ATP-dependent conversion of formylglycinamide ribonucleotide (FGAR) and glutamine to yield formylglycinamidine ribonucleotide (FGAM) and glutamate. This is Phosphoribosylformylglycinamidine synthase (ade3) from Schizosaccharomyces pombe (strain 972 / ATCC 24843) (Fission yeast).